A 209-amino-acid chain; its full sequence is Large ribosomal subunit protein uL3 (209 aa).

A disordered region spans residues 127-153 (NASRGPMSHGSKFHRAPGSMGAASDPS).

It belongs to the universal ribosomal protein uL3 family. In terms of assembly, part of the 50S ribosomal subunit. Forms a cluster with proteins L14 and L19.

One of the primary rRNA binding proteins, it binds directly near the 3'-end of the 23S rRNA, where it nucleates assembly of the 50S subunit. The protein is Large ribosomal subunit protein uL3 of Clostridium perfringens (strain SM101 / Type A).